The sequence spans 529 residues: Peptide chain release factor 3 (529 aa).

One can recognise a tr-type G domain in the interval 11 to 280 (SKRRTFAIIS…GLVAWAPAPM (270 aa)). Residues 20–27 (SHPDAGKT), 88–92 (DTPGH), and 142–145 (NKLD) each bind GTP.

This sequence belongs to the TRAFAC class translation factor GTPase superfamily. Classic translation factor GTPase family. PrfC subfamily.

It localises to the cytoplasm. Its function is as follows. Increases the formation of ribosomal termination complexes and stimulates activities of RF-1 and RF-2. It binds guanine nucleotides and has strong preference for UGA stop codons. It may interact directly with the ribosome. The stimulation of RF-1 and RF-2 is significantly reduced by GTP and GDP, but not by GMP. This chain is Peptide chain release factor 3, found in Pectobacterium carotovorum subsp. carotovorum (strain PC1).